A 535-amino-acid chain; its full sequence is Alpha-1,3-mannosyl-glycoprotein 4-beta-N-acetylglucosaminyltransferase A (535 aa).

Residues 1–6 (MRLRNG) lie on the Cytoplasmic side of the membrane. Residues 7–27 (TVATVLAFITSFLTLSWYTTW) traverse the membrane as a helical; Signal-anchor for type II membrane protein segment. At 28 to 535 (QNGKEKVIAY…NEIHIKKVTN (508 aa)) the chain is on the lumenal side. Positions 31–57 (KEKVIAYQREFLALKERLRIAEHRISQ) form a coiled coil. 2 N-linked (GlcNAc...) asparagine glycosylation sites follow: Asn77 and Asn458. The residue at position 474 (Ser474) is a Phosphoserine.

Belongs to the glycosyltransferase 54 family. It depends on a divalent metal cation as a cofactor. Post-translationally, N-glycosylated. Highly expressed in small intestine, kidney, lung and spleen. Weakly expressed in brain, heart and liver.

The protein localises to the golgi apparatus membrane. It is found in the secreted. It carries out the reaction N(4)-{beta-D-GlcNAc-(1-&gt;2)-alpha-D-Man-(1-&gt;3)-[beta-D-GlcNAc-(1-&gt;2)-alpha-D-Man-(1-&gt;6)]-beta-D-Man-(1-&gt;4)-beta-D-GlcNAc-(1-&gt;4)-beta-D-GlcNAc}-L-asparaginyl-[protein] + UDP-N-acetyl-alpha-D-glucosamine = N(4)-{beta-D-GlcNAc-(1-&gt;2)-[beta-D-GlcNAc-(1-&gt;4)]-alpha-D-Man-(1-&gt;3)-[beta-D-GlcNAc-(1-&gt;2)-alpha-D-Man-(1-&gt;6)]-beta-D-Man-(1-&gt;4)-beta-D-GlcNAc-(1-&gt;4)-beta-D-GlcNAc}-L-asparaginyl-[protein] + UDP + H(+). The catalysed reaction is an N(4)-{beta-D-GlcNAc-(1-&gt;2)-alpha-D-Man-(1-&gt;3)-[alpha-D-Man-(1-&gt;6)]-beta-D-Man-(1-&gt;4)-beta-D-GlcNAc-(1-&gt;4)-beta-D-GlcNAc}-L-asparaginyl-[protein] + UDP-N-acetyl-alpha-D-glucosamine = an N(4)-{beta-D-GlcNAc-(1-&gt;2)-[beta-D-GlcNAc-(1-&gt;4)]-alpha-D-Man-(1-&gt;3)-[alpha-D-Man-(1-&gt;6)]-beta-D-Man-(1-&gt;4)-beta-D-GlcNAc-(1-&gt;4)-beta-D-GlcNAc}-L-asparaginyl-[protein] + UDP + H(+). It catalyses the reaction an N(4)-{beta-D-GlcNAc-(1-&gt;2)-alpha-D-Man-(1-&gt;3)-[beta-D-GlcNAc-(1-&gt;2)-[beta-D-GlcNAc-(1-&gt;6)]-alpha-D-Man-(1-&gt;6)]-beta-D-Man-(1-&gt;4)-beta-D-GlcNAc-(1-&gt;4)-beta-D-GlcNAc}-L-asparaginyl-[protein] + UDP-N-acetyl-alpha-D-glucosamine = an N(4)-{beta-D-GlcNAc-(1-&gt;2)-[beta-D-GlcNAc-(1-&gt;4)]-alpha-D-Man-(1-&gt;3)-[beta-D-GlcNAc-(1-&gt;2)-[beta-D-GlcNAc-(1-&gt;6)]-alpha-D-Man-(1-&gt;6)]-beta-D-Man-(1-&gt;4)-beta-D-GlcNAc-(1-&gt;4)-beta-D-GlcNAc}-L-asparaginyl-[protein] + UDP + H(+). The enzyme catalyses an N(4)-{beta-D-GlcNAc-(1-&gt;2)-alpha-D-Man-(1-&gt;3)-[beta-D-GlcNAc-(1-&gt;2)-alpha-D-Man-(1-&gt;6)]-beta-D-Man-(1-&gt;4)-beta-D-GlcNAc-(1-&gt;4)-[alpha-L-Fuc-(1-&gt;6)]-beta-D-GlcNAc}-L-asparaginyl-[protein] + UDP-N-acetyl-alpha-D-glucosamine = N(4)-{beta-D-GlcNAc-(1-&gt;2)-[beta-D-GlcNAc-(1-&gt;4)]-alpha-D-Man-(1-&gt;3)-[beta-D-GlcNAc-(1-&gt;2)-alpha-D-Man-(1-&gt;6)]-beta-D-Man-(1-&gt;4)-beta-D-GlcNAc-(1-&gt;4)-[alpha-L-Fuc-(1-&gt;6)]-beta-D-GlcNAc}-asparaginyl-[protein] + UDP + H(+). It carries out the reaction an N(4)-{beta-D-GlcNAc-(1-&gt;2)-alpha-D-Man-(1-&gt;3)-[beta-D-Gal-(1-&gt;4)-beta-D-GlcNAc-(1-&gt;2)-alpha-D-Man-(1-&gt;6)]-beta-D-Man-(1-&gt;4)-beta-D-GlcNAc-(1-&gt;4)-beta-D-GlcNAc}-L-asparaginyl-[protein] + UDP-N-acetyl-alpha-D-glucosamine = an N(4)-{beta-D-GlcNAc-(1-&gt;2)-[beta-D-GlcNAc-(1-&gt;4)]-alpha-D-Man-(1-&gt;3)-[beta-D-Gal-(1-&gt;4)-beta-D-GlcNAc-(1-&gt;2)-alpha-D-Man-(1-&gt;6)]-beta-D-Man-(1-&gt;4)-beta-D-GlcNAc-(1-&gt;4)-beta-D-GlcNAc}-L-asparaginyl-[protein] + UDP + H(+). The catalysed reaction is N(4)-{beta-D-GlcNAc-(1-&gt;2)-alpha-D-Man-(1-&gt;3)-[alpha-D-Man-(1-&gt;3)-{alpha-D-Man-(1-&gt;6)}-alpha-D-Man-(1-&gt;6)]-beta-D-Man-(1-&gt;4)-beta-D-GlcNAc-(1-&gt;4)-beta-D-GlcNAc}-asparaginyl-[protein] + UDP-N-acetyl-alpha-D-glucosamine = N(4)-{beta-D-GlcNAc-(1-&gt;2)-[beta-D-GlcNAc-(1-&gt;4)]-alpha-D-Man-(1-&gt;3)-[alpha-D-Man-(1-&gt;3)-{alpha-D-Man-(1-&gt;6)}-alpha-D-Man-(1-&gt;6)]-beta-D-Man-(1-&gt;4)-beta-D-GlcNAc-(1-&gt;4)-beta-D-GlcNAc}-asparaginyl-[protein] + UDP + H(+). It catalyses the reaction N(4)-{beta-D-GlcNAc-(1-&gt;2)-alpha-D-Man-(1-&gt;3)-beta-D-Man-(1-&gt;4)-beta-D-GlcNAc-(1-&gt;4)-beta-D-GlcNAc}-asparaginyl-[protein] + UDP-N-acetyl-alpha-D-glucosamine = N(4)-{beta-D-GlcNAc-(1-&gt;2)-[beta-D-GlcNAc-(1-&gt;4)]-alpha-D-Man-(1-&gt;3)-beta-D-Man-(1-&gt;4)-beta-D-GlcNAc-(1-&gt;4)-beta-D-GlcNAc}-asparaginyl-[protein] + UDP + H(+). It participates in protein modification; protein glycosylation. Inhibited by UDP. Glycosyltransferase that catalyze the transfer of GlcNAc from UDP-GlcNAc to the GlcNAcbeta1-2Manalpha1-3 arm of the core structure of N-linked glycans through a beta1-4 linkage and participates in the production of tri- and tetra-antennary N-linked sugar chains. Involved in glucose transport by mediating SLC2A2/GLUT2 glycosylation, thereby controlling cell-surface expression of SLC2A2 in pancreatic beta cells. This is Alpha-1,3-mannosyl-glycoprotein 4-beta-N-acetylglucosaminyltransferase A from Bos taurus (Bovine).